A 569-amino-acid chain; its full sequence is Pyruvate decarboxylase (569 aa).

Pyruvate-binding residues include Asp-38 and His-124. Thiamine diphosphate-binding positions include Thr-398 and 421-423 (GSI). Position 451 (Asp-451) interacts with Mg(2+). Residues 452-453 (GS) and 478-483 (NEGYTI) contribute to the thiamine diphosphate site. Positions 478 and 480 each coordinate Mg(2+). Glu-484 lines the pyruvate pocket.

It belongs to the TPP enzyme family. Homotetramer. It depends on Mg(2+) as a cofactor. The cofactor is thiamine diphosphate.

The catalysed reaction is a 2-oxocarboxylate + H(+) = an aldehyde + CO2. The enzyme catalyses pyruvate + H(+) = acetaldehyde + CO2. This Aspergillus fumigatus (strain ATCC MYA-4609 / CBS 101355 / FGSC A1100 / Af293) (Neosartorya fumigata) protein is Pyruvate decarboxylase (pdcA).